The primary structure comprises 282 residues: WRKY transcription factor 71 (282 aa).

The segment at 63–121 (LTSNSPVVSSSSNEGEPKENTNDKSDQMEDNEGDLHGVGESSKQLTKQGKKKGEKKERE) is disordered. Over residues 65–75 (SNSPVVSSSSN) the composition is skewed to low complexity. The segment covering 77 to 99 (GEPKENTNDKSDQMEDNEGDLHG) has biased composition (basic and acidic residues). The segment at residues 130–195 (SEIDHLEDGY…YEGKHNHPIP (66 aa)) is a DNA-binding region (WRKY).

The protein belongs to the WRKY group II-c family.

It is found in the nucleus. Transcription factor. Interacts specifically with the W box (5'-(T)TGAC[CT]-3'), a frequently occurring elicitor-responsive cis-acting element. This chain is WRKY transcription factor 71 (WRKY71), found in Arabidopsis thaliana (Mouse-ear cress).